A 236-amino-acid polypeptide reads, in one-letter code: Lipoarabinomannan carrier protein LprG (236 aa).

The N-terminal stretch at methionine 1–glycine 26 is a signal peptide. A lipid anchor (N-palmitoyl cysteine) is attached at cysteine 27. Cysteine 27 carries the S-diacylglycerol cysteine lipid modification.

It belongs to the LppX/LprAFG lipoprotein family. Post-translationally, modified by Lgt on Cys-27 with an S-linked diacylglyceral, signal peptide is removed by LspA, Cys-27 is further modifed with a fatty acid on its amino group by Lnt yielding a triacylated protein.

Its subcellular location is the cell inner membrane. The protein localises to the secreted. The protein resides in the cell wall. Functionally, helps membrane protein Mb1445c (P55) transport triacylglycerides (TAG) across the inner cell membrane into the periplasm and probably ultimately to the outer membrane. Binds TAG in its hydrophobic cavity and transfers it between lipid bilayers. TAG probably regulates lipid metabolism and growth regulation and plays a structural role in the outer membrane. Binds di- and triacylated phosphatidyl-myo-inositol mannosides (PIMs), and glycolipid lipoglycan modulins lipoarabinomannan (LAM) and lipomannan (LM), facilitating their recognition by TLR2. Required for activity of drug efflux transporter Mb1445c. Required, probably with Mb1445c, for normal surface localization of LAM. In terms of biological role, constitutes a host TLR2 agonist (toll-like receptor). This Mycobacterium bovis (strain ATCC BAA-935 / AF2122/97) protein is Lipoarabinomannan carrier protein LprG.